The sequence spans 150 residues: Small ribosomal subunit protein bS6 (150 aa).

The tract at residues 92 to 150 (KGINKPAKPKKTFKKTFVARKFSRDDESKTHSTEEPRRANTKSTYKKSTSFSQDNKNKK) is disordered. Residues 98–109 (AKPKKTFKKTFV) show a composition bias toward basic residues. Positions 113–129 (FSRDDESKTHSTEEPRR) are enriched in basic and acidic residues. Residues 132–141 (TKSTYKKSTS) show a composition bias toward low complexity.

Belongs to the bacterial ribosomal protein bS6 family.

In terms of biological role, binds together with bS18 to 16S ribosomal RNA. The polypeptide is Small ribosomal subunit protein bS6 (Mycoplasmopsis pulmonis (strain UAB CTIP) (Mycoplasma pulmonis)).